Here is a 385-residue protein sequence, read N- to C-terminus: Histidinol-phosphate aminotransferase (385 aa).

N6-(pyridoxal phosphate)lysine is present on Lys235.

It belongs to the class-II pyridoxal-phosphate-dependent aminotransferase family. Histidinol-phosphate aminotransferase subfamily. In terms of assembly, homodimer. Pyridoxal 5'-phosphate serves as cofactor.

The catalysed reaction is L-histidinol phosphate + 2-oxoglutarate = 3-(imidazol-4-yl)-2-oxopropyl phosphate + L-glutamate. The protein operates within amino-acid biosynthesis; L-histidine biosynthesis; L-histidine from 5-phospho-alpha-D-ribose 1-diphosphate: step 7/9. The protein is Histidinol-phosphate aminotransferase of Nocardia farcinica (strain IFM 10152).